Consider the following 725-residue polypeptide: Ferric reduction oxidase 2 (725 aa).

Over 1–28 (MEIEKSNNGGSNPSAGEEFKDMIKGVTK) the chain is Cytoplasmic. A helical membrane pass occupies residues 29 to 48 (FLMMVIFLGTIMLWIMMPTL). Residues 49–74 (TYRTKWLPHLRIKFGTSTYFGATGTT) lie on the Extracellular side of the membrane. A helical membrane pass occupies residues 75–93 (LFMYMFPMMVVACLGCVYL). Over 94 to 125 (HFKNRKSPHHIDRETKGGVWSKLRKPMLVKGP) the chain is Cytoplasmic. The helical transmembrane segment at 126-149 (LGIVSVTEITFLAMFVALLLWCFI) threads the bilayer. Residues 150-217 (TYLRNSFATI…MGLTSESSIK (68 aa)) are Extracellular-facing. A Ferric oxidoreductase domain is found at 183 to 303 (LGLIGNICLA…YLYIVFMLFF (121 aa)). The chain crosses the membrane as a helical span at residues 218 to 241 (YHIWLGHMVMALFTVHGLCYIIYW). Residues histidine 219 and histidine 233 each coordinate heme. The Cytoplasmic portion of the chain corresponds to 242 to 291 (ASMHEISQMIMWDTKGVSNLAGEIALAAGLVMWATTYPKIRRRFFEVFFY). The helical transmembrane segment at 292-316 (THYLYIVFMLFFVLHVGISFSFIAL) threads the bilayer. Heme contacts are provided by histidine 293 and histidine 306. At 317 to 338 (PGFYIFLVDRFLRFLQSRENVR) the chain is on the extracellular side. Residues 332–437 (QSRENVRLLA…EGPYGPASAD (106 aa)) enclose the FAD-binding FR-type domain. Residues 339–359 (LLAARILPSDTMELTFSKNSK) traverse the membrane as a helical segment. Residues 360 to 554 (LVYSPTSIMF…SISSILGPNS (195 aa)) are Cytoplasmic-facing. 381 to 384 (HPFT) serves as a coordination point for FAD. Residue 429–432 (GPYG) coordinates NAD(+). Residues 555–577 (WLWLGAILASSFLIFMIIIGIIT) traverse the membrane as a helical segment. The Extracellular portion of the chain corresponds to 578–597 (RYYIYPIDHNTNKIYSLTSK). The helical transmembrane segment at 598 to 619 (TIIYILVISVSIMATCSAAMLW) threads the bilayer. The Cytoplasmic portion of the chain corresponds to 620-725 (NKKKYGKVES…LHFESISFSW (106 aa)).

The protein belongs to the ferric reductase (FRE) family. Requires FAD as cofactor. As to expression, expressed in the epidermal cells of the roots. High expression in lateral roots and root hairs. Detected in leaves, stems, siliques and in flowers in anthers and styles.

It localises to the cell membrane. The enzyme catalyses 2 a Fe(II)-siderophore + NAD(+) + H(+) = 2 a Fe(III)-siderophore + NADH. Flavocytochrome that transfers electrons across the plasma membrane to reduce ferric iron chelates to form soluble ferrous iron in the rhizosphere. May be involved in the delivery of iron to developing pollen grains. Also acts as a copper-chelate reductase. Involved in glycine betaine-mediated chilling tolerance and reactive oxygen species accumulation. This is Ferric reduction oxidase 2 (FRO2) from Arabidopsis thaliana (Mouse-ear cress).